The primary structure comprises 132 residues: Fatty acid-binding protein, liver (132 aa).

Residue valine 1 is modified to N-acetylvaline. Tyrosine 19 is subject to Phosphotyrosine; by Tyr-kinases.

The protein belongs to the calycin superfamily. Fatty-acid binding protein (FABP) family.

The protein resides in the cytoplasm. In terms of biological role, FABPs are thought to play a role in the intracellular transport of long-chain fatty acids and their acyl-CoA esters. The sequence is that of Fatty acid-binding protein, liver from Ginglymostoma cirratum (Nurse shark).